The chain runs to 501 residues: Head-tail preconnector protein GP5 (501 aa).

Residue Ser162 is the Nucleophile of the active site. Lys214 serves as the catalytic Proton donor/acceptor. 3 TRI repeats span residues 321–358, 371–417, and 418–455; these read ILTCQEAKGREQLATMLAGQQGMSVEQARAILAAAAPQ, IMVC…LRDQ, and IMALDEAKGAEAQAEQLAACPGMTVESARAVLAAGSGK. Positions 321 to 455 are 3 X 38 AA repeats; sequence ILTCQEAKGR…RAVLAAGSGK (135 aa).

Belongs to the peptidase S49 family.

Scaffold protein GP6 forms the scaffold for capsid assembly and is required for binding of the 5 and 4 protein products. It is subsequently lost from the head during maturation. The polypeptide is Head-tail preconnector protein GP5 (5) (Escherichia coli (Bacteriophage 21)).